The primary structure comprises 283 residues: Thymidylate synthase (283 aa).

Residue R22 participates in dUMP binding. C160 serves as the catalytic Nucleophile. Residues 180–183, N191, and 221–223 each bind dUMP; these read RSCD and HIY. D183 provides a ligand contact to (6R)-5,10-methylene-5,6,7,8-tetrahydrofolate. S282 serves as a coordination point for (6R)-5,10-methylene-5,6,7,8-tetrahydrofolate.

Belongs to the thymidylate synthase family. Bacterial-type ThyA subfamily. As to quaternary structure, homodimer.

The protein resides in the cytoplasm. It carries out the reaction dUMP + (6R)-5,10-methylene-5,6,7,8-tetrahydrofolate = 7,8-dihydrofolate + dTMP. It participates in pyrimidine metabolism; dTTP biosynthesis. Catalyzes the reductive methylation of 2'-deoxyuridine-5'-monophosphate (dUMP) to 2'-deoxythymidine-5'-monophosphate (dTMP) while utilizing 5,10-methylenetetrahydrofolate (mTHF) as the methyl donor and reductant in the reaction, yielding dihydrofolate (DHF) as a by-product. This enzymatic reaction provides an intracellular de novo source of dTMP, an essential precursor for DNA biosynthesis. This is Thymidylate synthase from Shewanella loihica (strain ATCC BAA-1088 / PV-4).